Consider the following 497-residue polypeptide: Angiopoietin-1 (497 aa).

A signal peptide spans Met-1–Cys-19. 5 N-linked (GlcNAc...) asparagine glycosylation sites follow: Asn-92, Asn-122, Asn-154, Asn-243, and Asn-294. Residues Arg-158–Asp-256 are a coiled coil. Residues Lys-276 to Asp-496 form the Fibrinogen C-terminal domain. Disulfide bonds link Cys-285–Cys-314 and Cys-438–Cys-451.

In terms of assembly, homooligomer. Interacts with TEK/TIE2. Interacts with SVEP1/polydom. Interacts with THBD; this interaction significantly inhibits the generation of activated PC and TAFIa/CPB2 by the thrombin/thrombomodulin complex.

The protein localises to the secreted. In terms of biological role, binds and activates TIE2 receptor by inducing its tyrosine phosphorylation. Implicated in endothelial developmental processes later and distinct from that of VEGF. Appears to play a crucial role in mediating reciprocal interactions between the endothelium and surrounding matrix and mesenchyme. Mediates blood vessel maturation/stability. It may play an important role in the heart early development. The chain is Angiopoietin-1 (ANGPT1) from Canis lupus familiaris (Dog).